The following is a 171-amino-acid chain: 3-hydroxydecanoyl-[acyl-carrier-protein] dehydratase (171 aa).

H70 is an active-site residue.

Belongs to the thioester dehydratase family. FabA subfamily. Homodimer.

The protein resides in the cytoplasm. It catalyses the reaction a (3R)-hydroxyacyl-[ACP] = a (2E)-enoyl-[ACP] + H2O. The catalysed reaction is (3R)-hydroxydecanoyl-[ACP] = (2E)-decenoyl-[ACP] + H2O. It carries out the reaction (2E)-decenoyl-[ACP] = (3Z)-decenoyl-[ACP]. It participates in lipid metabolism; fatty acid biosynthesis. Necessary for the introduction of cis unsaturation into fatty acids. Catalyzes the dehydration of (3R)-3-hydroxydecanoyl-ACP to E-(2)-decenoyl-ACP and then its isomerization to Z-(3)-decenoyl-ACP. Can catalyze the dehydratase reaction for beta-hydroxyacyl-ACPs with saturated chain lengths up to 16:0, being most active on intermediate chain length. This is 3-hydroxydecanoyl-[acyl-carrier-protein] dehydratase from Stutzerimonas stutzeri (strain A1501) (Pseudomonas stutzeri).